Consider the following 120-residue polypeptide: Large ribosomal subunit protein uL18 (120 aa).

It belongs to the universal ribosomal protein uL18 family. In terms of assembly, part of the 50S ribosomal subunit; part of the 5S rRNA/L5/L18/L25 subcomplex. Contacts the 5S and 23S rRNAs.

This is one of the proteins that bind and probably mediate the attachment of the 5S RNA into the large ribosomal subunit, where it forms part of the central protuberance. The chain is Large ribosomal subunit protein uL18 from Bartonella quintana (strain Toulouse) (Rochalimaea quintana).